We begin with the raw amino-acid sequence, 265 residues long: Tryptophan synthase alpha chain (265 aa).

Active-site proton acceptor residues include Glu49 and Asp60.

Belongs to the TrpA family. In terms of assembly, tetramer of two alpha and two beta chains.

The catalysed reaction is (1S,2R)-1-C-(indol-3-yl)glycerol 3-phosphate + L-serine = D-glyceraldehyde 3-phosphate + L-tryptophan + H2O. It participates in amino-acid biosynthesis; L-tryptophan biosynthesis; L-tryptophan from chorismate: step 5/5. Functionally, the alpha subunit is responsible for the aldol cleavage of indoleglycerol phosphate to indole and glyceraldehyde 3-phosphate. This is Tryptophan synthase alpha chain from Paracoccus denitrificans (strain Pd 1222).